The sequence spans 294 residues: Methionine aminopeptidase (294 aa).

His65 is a binding site for substrate. Positions 85, 96, and 156 each coordinate a divalent metal cation. His164 is a substrate binding site. Residues Glu189 and Glu279 each coordinate a divalent metal cation.

This sequence belongs to the peptidase M24A family. Methionine aminopeptidase archaeal type 2 subfamily. As to quaternary structure, monomer. Co(2+) is required as a cofactor. Zn(2+) serves as cofactor. Requires Mn(2+) as cofactor. The cofactor is Fe(2+).

It catalyses the reaction Release of N-terminal amino acids, preferentially methionine, from peptides and arylamides.. Removes the N-terminal methionine from nascent proteins. The N-terminal methionine is often cleaved when the second residue in the primary sequence is small and uncharged (Met-Ala-, Cys, Gly, Pro, Ser, Thr, or Val). The polypeptide is Methionine aminopeptidase (Methanocaldococcus jannaschii (strain ATCC 43067 / DSM 2661 / JAL-1 / JCM 10045 / NBRC 100440) (Methanococcus jannaschii)).